Here is a 228-residue protein sequence, read N- to C-terminus: uncharacterized protein (228 aa).

The region spanning 11 to 78 (PPVNQQIYRI…PQRGSYVNKI (68 aa)) is the HTH gntR-type domain. Residues 38–57 (EKEVSVRFNVSRQPVREAFI) constitute a DNA-binding region (H-T-H motif).

This is an uncharacterized protein from Escherichia coli O6:H1 (strain CFT073 / ATCC 700928 / UPEC).